We begin with the raw amino-acid sequence, 386 residues long: Patatin-06 (386 aa).

The first 23 residues, methionine 1–alanine 23, serve as a signal peptide directing secretion. In terms of domain architecture, PNPLA spans leucine 32–leucine 229. The GXGXXG motif lies at glycine 36–glycine 41. Positions glycine 75–glycine 79 match the GXSXG motif. Serine 77 functions as the Nucleophile in the catalytic mechanism. Asparagine 115 is a glycosylation site (N-linked (GlcNAc...) asparagine). Aspartate 215 (proton acceptor) is an active-site residue. A DGA/G motif is present at residues aspartate 215–glycine 217. Positions glutamate 321–alanine 384 form a coiled coil.

The protein belongs to the patatin family. Tuber.

It localises to the vacuole. In terms of biological role, probable lipolytic acyl hydrolase (LAH), an activity which is thought to be involved in the response of tubers to pathogens. This chain is Patatin-06, found in Solanum tuberosum (Potato).